We begin with the raw amino-acid sequence, 671 residues long: Condensin complex subunit 2 (671 aa).

The segment covering 1–24 (MDESLTPNPKQKPASTTTRIQAPT) has biased composition (polar residues). Disordered regions lie at residues 1–33 (MDES…GSND), 404–444 (NSWA…KQAE), and 510–564 (RRKN…ISQP). Positions 406 to 415 (WAGPDHWKYR) match the Kleisin-gamma middle domain (GM domain) involved in chromosome-binding motif. Positions 536–556 (VYDDDDGPFDDNENDQSDAED) are enriched in acidic residues.

This sequence belongs to the CND2 (condensin subunit 2) family. Component of the condensin complex. Mostly expressed in flower buds and flowers, and, to a lower extent, in roots, stems, leaves and seedlings.

It is found in the cytoplasm. It localises to the chromosome. In terms of biological role, regulatory subunit of the condensin complex, a complex required for conversion of interphase chromatin into mitotic-like condense chromosomes. The condensin complex probably introduces positive supercoils into relaxed DNA in the presence of type I topoisomerases and converts nicked DNA into positive knotted forms in the presence of type II topoisomerases. Essential protein. This Arabidopsis thaliana (Mouse-ear cress) protein is Condensin complex subunit 2 (CAPH).